The primary structure comprises 81 residues: MNDIYTQAQHQLDALGLRCPEPVMMIRKTVRKMAEGETLLVIADDPATTRDIPSFCEFMDHTLIASDISKTPYHYLLKKGL.

The active-site Cysteine persulfide intermediate is the Cys-19.

This sequence belongs to the sulfur carrier protein TusA family.

The protein resides in the cytoplasm. Sulfur carrier protein which probably makes part of a sulfur-relay system. The sequence is that of Sulfur carrier protein TusA from Shewanella frigidimarina (strain NCIMB 400).